Reading from the N-terminus, the 160-residue chain is Protein-export protein SecB (160 aa).

It belongs to the SecB family. As to quaternary structure, homotetramer, a dimer of dimers. One homotetramer interacts with 1 SecA dimer.

It is found in the cytoplasm. Its function is as follows. One of the proteins required for the normal export of preproteins out of the cell cytoplasm. It is a molecular chaperone that binds to a subset of precursor proteins, maintaining them in a translocation-competent state. It also specifically binds to its receptor SecA. This Rhizobium johnstonii (strain DSM 114642 / LMG 32736 / 3841) (Rhizobium leguminosarum bv. viciae) protein is Protein-export protein SecB.